The primary structure comprises 388 residues: tRNA(Ile)-lysidine synthase (388 aa).

An ATP-binding site is contributed by 51 to 56 (SGGRDS).

It belongs to the tRNA(Ile)-lysidine synthase family.

Its subcellular location is the cytoplasm. The enzyme catalyses cytidine(34) in tRNA(Ile2) + L-lysine + ATP = lysidine(34) in tRNA(Ile2) + AMP + diphosphate + H(+). Ligates lysine onto the cytidine present at position 34 of the AUA codon-specific tRNA(Ile) that contains the anticodon CAU, in an ATP-dependent manner. Cytidine is converted to lysidine, thus changing the amino acid specificity of the tRNA from methionine to isoleucine. The sequence is that of tRNA(Ile)-lysidine synthase from Bifidobacterium longum subsp. infantis (strain ATCC 15697 / DSM 20088 / JCM 1222 / NCTC 11817 / S12).